We begin with the raw amino-acid sequence, 206 residues long: Large ribosomal subunit protein uL4 (206 aa).

The tract at residues 44-87 is disordered; that stretch reads KRQGTQKAKTRSEVRGGGRKPWRQKGTGHARQGSTRSPQWTGGG. The segment covering 60–71 has biased composition (basic residues); the sequence is GGRKPWRQKGTG.

It belongs to the universal ribosomal protein uL4 family. Part of the 50S ribosomal subunit.

Functionally, one of the primary rRNA binding proteins, this protein initially binds near the 5'-end of the 23S rRNA. It is important during the early stages of 50S assembly. It makes multiple contacts with different domains of the 23S rRNA in the assembled 50S subunit and ribosome. In terms of biological role, forms part of the polypeptide exit tunnel. This chain is Large ribosomal subunit protein uL4, found in Agathobacter rectalis (strain ATCC 33656 / DSM 3377 / JCM 17463 / KCTC 5835 / VPI 0990) (Eubacterium rectale).